The sequence spans 147 residues: uncharacterized protein (147 aa).

The helical transmembrane segment at 69 to 89 (IFFFLSLYLSSIKIPMLILNI) threads the bilayer.

It is found in the membrane. This is an uncharacterized protein from Saccharomyces cerevisiae (strain ATCC 204508 / S288c) (Baker's yeast).